The primary structure comprises 422 residues: Serine hydroxymethyltransferase (422 aa).

120 to 122 (GHI) is a binding site for (6S)-5,6,7,8-tetrahydrofolate. Position 226 is an N6-(pyridoxal phosphate)lysine (Lys226). Residue Glu241 participates in (6S)-5,6,7,8-tetrahydrofolate binding.

The protein belongs to the SHMT family. Homodimer. Pyridoxal 5'-phosphate serves as cofactor.

Its subcellular location is the cytoplasm. The enzyme catalyses 5,10-methylenetetrahydromethanopterin + glycine + H2O = 5,6,7,8-tetrahydromethanopterin + L-serine. The protein operates within amino-acid biosynthesis; glycine biosynthesis; glycine from L-serine: step 1/1. Functionally, catalyzes the reversible interconversion of serine and glycine with tetrahydromethanopterin (H4MPT) serving as the one-carbon carrier. Also exhibits a pteridine-independent aldolase activity toward beta-hydroxyamino acids, producing glycine and aldehydes, via a retro-aldol mechanism. The chain is Serine hydroxymethyltransferase from Methanosphaera stadtmanae (strain ATCC 43021 / DSM 3091 / JCM 11832 / MCB-3).